Here is a 189-residue protein sequence, read N- to C-terminus: uncharacterized protein (189 aa).

An N-terminal signal peptide occupies residues 1 to 23; the sequence is MIKTTPHKIVILMGILLSPSVFA. Residues 104-125 are disordered; sequence SSPKLIIPQSGDSSSTTSNIGM. Residues 113 to 123 are compositionally biased toward polar residues; the sequence is SGDSSSTTSNI.

The protein belongs to the fimbrial protein family.

It is found in the fimbrium. Part of the yadCKLM-htrE-yadVN fimbrial operon. Could contribute to adhesion to various surfaces in specific environmental niches. This is an uncharacterized protein from Escherichia coli (strain K12).